A 1137-amino-acid polypeptide reads, in one-letter code: Voltage-dependent calcium channel subunit alpha-2/delta-4 (1137 aa).

The first 19 residues, 1–19 (MVCGCSALLPLPNPRPTMP), serve as a signal peptide directing secretion. Residues 20–1115 (ATPNFLANPS…AQDCGGASDT (1096 aa)) are Extracellular-facing. N-linked (GlcNAc...) asparagine glycosylation is present at N201. The 183-residue stretch at 291-473 (DIVILVDVSG…ENVMEYLHVL (183 aa)) folds into the VWFA domain. The a divalent metal cation site is built by D297, S299, and S301. Positions 297–301 (DVSGS) match the MIDAS-like motif motif. An intrachain disulfide couples C447 to C1097. One can recognise a Cache domain in the interval 487 to 580 (WTEAYMDSKL…RPLYREGKKL (94 aa)). N-linked (GlcNAc...) asparagine glycosylation is present at N664. The chain crosses the membrane as a helical span at residues 1116 to 1136 (SASPPLLLLPVCAWGLLPQLL). A topological domain (cytoplasmic) is located at residue R1137.

Belongs to the calcium channel subunit alpha-2/delta family. In terms of assembly, dimer formed of alpha-2-2 and delta-2 chains; disulfide-linked. Voltage-dependent calcium channels are multisubunit complexes, consisting of alpha-1 (CACNA1), alpha-2 (CACNA2D), beta (CACNB) and delta (CACNA2D) subunits in a 1:1:1:1 ratio. Interacts with CACNA1C and CACNB3. In terms of processing, may be proteolytically processed into subunits alpha-2-4 and delta-4 that are disulfide-linked. It is however unclear whether such cleavage really takes place in vivo and has a functional role. Predominantly expressed in certain types of endocrine cells. Present in the Paneth cells of the small intestine. Also present in the erythroblasts in the fetal liver, in the cells of the zona reticularis of the adrenal gland and in the basophils of the pituitary. Present at low level in some brain regions such as the cerebellum (at protein level).

The protein resides in the membrane. Its function is as follows. The alpha-2/delta subunit of voltage-dependent calcium channels regulates calcium current density and activation/inactivation kinetics of the calcium channel. This Homo sapiens (Human) protein is Voltage-dependent calcium channel subunit alpha-2/delta-4 (CACNA2D4).